A 141-amino-acid polypeptide reads, in one-letter code: Small ribosomal subunit protein uS12 (141 aa).

The interval 118–141 (TGVDKRRQQRSAYGAKRPKADKKK) is disordered.

Belongs to the universal ribosomal protein uS12 family. As to quaternary structure, part of the 30S ribosomal subunit. Contacts proteins S8 and S17. May interact with IF1 in the 30S initiation complex.

Functionally, with S4 and S5 plays an important role in translational accuracy. Interacts with and stabilizes bases of the 16S rRNA that are involved in tRNA selection in the A site and with the mRNA backbone. Located at the interface of the 30S and 50S subunits, it traverses the body of the 30S subunit contacting proteins on the other side and probably holding the rRNA structure together. The combined cluster of proteins S8, S12 and S17 appears to hold together the shoulder and platform of the 30S subunit. The polypeptide is Small ribosomal subunit protein uS12 (Mycoplasmoides gallisepticum (strain R(low / passage 15 / clone 2)) (Mycoplasma gallisepticum)).